Here is a 352-residue protein sequence, read N- to C-terminus: D-alanine--D-alanine ligase A (352 aa).

The ATP-grasp domain maps to 138-341; the sequence is KRMVQSAGLV…PPKLVGALVE (204 aa). 165 to 220 serves as a coordination point for ATP; sequence ECLGSSTLFVKPATSGSSIGVSRVSNALEYAAAFAIAAREDTKVLVEAAVCGREIE. 3 residues coordinate Mg(2+): aspartate 295, glutamate 308, and asparagine 310.

Belongs to the D-alanine--D-alanine ligase family. The cofactor is Mg(2+). Mn(2+) is required as a cofactor.

The protein localises to the cytoplasm. It catalyses the reaction 2 D-alanine + ATP = D-alanyl-D-alanine + ADP + phosphate + H(+). Its pathway is cell wall biogenesis; peptidoglycan biosynthesis. Functionally, cell wall formation. The polypeptide is D-alanine--D-alanine ligase A (Pseudomonas putida (strain ATCC 47054 / DSM 6125 / CFBP 8728 / NCIMB 11950 / KT2440)).